The following is a 180-amino-acid chain: Large ribosomal subunit protein uL5 (180 aa).

This sequence belongs to the universal ribosomal protein uL5 family. In terms of assembly, part of the 50S ribosomal subunit; part of the 5S rRNA/L5/L18/L25 subcomplex. Contacts the 5S rRNA and the P site tRNA. Forms a bridge to the 30S subunit in the 70S ribosome.

Its function is as follows. This is one of the proteins that bind and probably mediate the attachment of the 5S RNA into the large ribosomal subunit, where it forms part of the central protuberance. In the 70S ribosome it contacts protein S13 of the 30S subunit (bridge B1b), connecting the 2 subunits; this bridge is implicated in subunit movement. Contacts the P site tRNA; the 5S rRNA and some of its associated proteins might help stabilize positioning of ribosome-bound tRNAs. The polypeptide is Large ribosomal subunit protein uL5 (Lactobacillus johnsonii (strain CNCM I-12250 / La1 / NCC 533)).